A 589-amino-acid chain; its full sequence is Aspartate--tRNA ligase (589 aa).

Glu174 contacts L-aspartate. The tract at residues 198–201 is aspartate; it reads QLFK. Residue Arg220 participates in L-aspartate binding. Residues 220-222 and Gln229 contribute to the ATP site; that span reads RDE. His448 contributes to the L-aspartate binding site. Glu484 contributes to the ATP binding site. Arg491 serves as a coordination point for L-aspartate. Residue 536 to 539 coordinates ATP; the sequence is GLDR.

It belongs to the class-II aminoacyl-tRNA synthetase family. Type 1 subfamily. Homodimer.

It is found in the cytoplasm. It carries out the reaction tRNA(Asp) + L-aspartate + ATP = L-aspartyl-tRNA(Asp) + AMP + diphosphate. Its function is as follows. Catalyzes the attachment of L-aspartate to tRNA(Asp) in a two-step reaction: L-aspartate is first activated by ATP to form Asp-AMP and then transferred to the acceptor end of tRNA(Asp). This chain is Aspartate--tRNA ligase, found in Leuconostoc citreum (strain KM20).